The sequence spans 273 residues: 4-hydroxy-tetrahydrodipicolinate reductase (273 aa).

NAD(+) is bound by residues 8 to 13 (GCAGNM), E34, 102 to 104 (GTT), and 128 to 131 (SPNM). H161 acts as the Proton donor/acceptor in catalysis. H162 contributes to the (S)-2,3,4,5-tetrahydrodipicolinate binding site. K165 acts as the Proton donor in catalysis. Position 171 to 172 (171 to 172 (GT)) interacts with (S)-2,3,4,5-tetrahydrodipicolinate.

The protein belongs to the DapB family.

Its subcellular location is the cytoplasm. It carries out the reaction (S)-2,3,4,5-tetrahydrodipicolinate + NAD(+) + H2O = (2S,4S)-4-hydroxy-2,3,4,5-tetrahydrodipicolinate + NADH + H(+). The catalysed reaction is (S)-2,3,4,5-tetrahydrodipicolinate + NADP(+) + H2O = (2S,4S)-4-hydroxy-2,3,4,5-tetrahydrodipicolinate + NADPH + H(+). It participates in amino-acid biosynthesis; L-lysine biosynthesis via DAP pathway; (S)-tetrahydrodipicolinate from L-aspartate: step 4/4. In terms of biological role, catalyzes the conversion of 4-hydroxy-tetrahydrodipicolinate (HTPA) to tetrahydrodipicolinate. This is 4-hydroxy-tetrahydrodipicolinate reductase from Methanosphaera stadtmanae (strain ATCC 43021 / DSM 3091 / JCM 11832 / MCB-3).